Reading from the N-terminus, the 454-residue chain is MASRIVQQQQARGEAVVGGGKQQKKNGVADGRNRKALGDIGNLANVRGVVDAKPNRPITRSFGAQLLANAQAAAAADNSKRQACANVAGPPAVANEGVAVAKRAAPKPVSKKVIVKPKPSEKVTDIDASPDKKEVLKDKKKEGDANPKKKSQHTLTSVLTARSKAACGITNKPKEQIIDIDASDVDNELAAVEYIDDIYKFYKLVENESRPHDYIGSQPEINERMRAILVDWLIDVHTKFELSLETLYLTINIIDRFLAVKTVPRRELQLVGISAMLMASKYEEIWPPEVNDFVCLSDRAYTHEHILTMEKTILNKLEWTLTVPTPLVFLVRFIKASVPDQELDNMAHFLSELGMMNYATLMYCPSMVAASAVLAARCTLNKAPFWNETLKLHTGYSQEQLMDCARLLVGFYSTLENGKLRVVYRKYSDPQKGAVAVLPPAKFLLPEGSASQHS.

The segment covering 1-11 (MASRIVQQQQA) has biased composition (polar residues). Disordered stretches follow at residues 1–35 (MASR…RNRK) and 108–155 (PVSK…QHTL). Positions 118 to 147 (KPSEKVTDIDASPDKKEVLKDKKKEGDANP) are enriched in basic and acidic residues.

Belongs to the cyclin family. Cyclin AB subfamily. In terms of assembly, interacts with the CDC2 protein kinase to form a serine/threonine kinase holoenzyme complex also known as maturation promoting factor (MPF). The cyclin subunit imparts substrate specificity to the complex.

Its function is as follows. Essential for the control of the cell cycle at the G2/M (mitosis) transition. The sequence is that of G2/mitotic-specific cyclin S13-6 from Glycine max (Soybean).